The chain runs to 496 residues: MKKYILSLDQGTTSSRAILFNKKGEIVHSAQKEFTQHFPKPGWVEHNAQEIWGSILAVIATCLSEADVKPEQIAGIGITNQRETAVVWDKTTGKPIYNAIVWQSRQTAEICDELKEKGYGEMVREKTGLLIDAYFSGTKVKWILDNVEGAREKAENGDLLFGTIDTWLVWKLSGGKAHVTDYSNASRTLMFNIHDLQWDDELLDMLTVPKSMLPEVRPSSEVYGETIDYHFFGQNVPIAGVAGDQQAALFGQACFGEGMAKNTYGTGCFMLMNTGEKAVASEHGLLTTIAWGIDGKVNYALEGSIFVAGSAIQWLRDGMRMFKDASESEVYASRVESTDGVYVVPAFVGLGTPYWDSEVRGAMFGVTRGTTKEHFIRATLESLAYQTKDVLCAMEADSGIELKTLRVDGGAVKNNFLMKFQSDILDVPVERPVINETTALGAAYLAGLAVGYWKNQDEIKEQWHMDKRFEPTMEAETSEELYAGWKKAIEATKAFK.

Residue threonine 12 coordinates ADP. ATP is bound by residues threonine 12, threonine 13, and serine 14. A sn-glycerol 3-phosphate-binding site is contributed by threonine 12. Arginine 16 serves as a coordination point for ADP. The sn-glycerol 3-phosphate site is built by arginine 82, glutamate 83, and tyrosine 134. 3 residues coordinate glycerol: arginine 82, glutamate 83, and tyrosine 134. A Phosphohistidine; by HPr modification is found at histidine 230. Aspartate 244 lines the sn-glycerol 3-phosphate pocket. Residues aspartate 244 and glutamine 245 each contribute to the glycerol site. Residues threonine 266 and glycine 309 each coordinate ADP. ATP contacts are provided by threonine 266, glycine 309, glutamine 313, and glycine 410. ADP contacts are provided by glycine 410 and asparagine 414.

This sequence belongs to the FGGY kinase family. As to quaternary structure, homotetramer and homodimer (in equilibrium). Post-translationally, the phosphoenolpyruvate-dependent sugar phosphotransferase system (PTS), including enzyme I, and histidine-containing protein (HPr) are required for the phosphorylation, which leads to the activation of the enzyme.

The enzyme catalyses glycerol + ATP = sn-glycerol 3-phosphate + ADP + H(+). It participates in polyol metabolism; glycerol degradation via glycerol kinase pathway; sn-glycerol 3-phosphate from glycerol: step 1/1. Activated by phosphorylation and inhibited by fructose 1,6-bisphosphate (FBP). Its function is as follows. Key enzyme in the regulation of glycerol uptake and metabolism. Catalyzes the phosphorylation of glycerol to yield sn-glycerol 3-phosphate. The polypeptide is Glycerol kinase (Bacillus thuringiensis (strain Al Hakam)).